The sequence spans 209 residues: Prolactin (209 aa).

The signal sequence occupies residues 1-24; that stretch reads MAQRFKGSNLFLTALLCLASQGHA. Cystine bridges form between cysteine 70–cysteine 184 and cysteine 201–cysteine 209.

Belongs to the somatotropin/prolactin family.

Its subcellular location is the secreted. The chain is Prolactin (prl) from Anguilla japonica (Japanese eel).